A 275-amino-acid chain; its full sequence is Fructose permease IID component (275 aa).

The region spanning 5 to 274 (KRLTKKEIFS…GILGYWAGFL (270 aa)) is the PTS EIID domain. A run of 5 helical transmembrane segments spans residues 100–120 (MKIGLMGPIAGVGDPIFWGTI), 127–147 (LGASLALGGNIAGPLLFFFLL), 187–207 (ILGLFVMGALVSKWTTINIPI), 227–247 (VLDSIMPGALPLGLTLLVAWM), and 255–275 (LLIICGIFVIGILGYWAGFLA).

Its subcellular location is the cell membrane. The phosphoenolpyruvate-dependent sugar phosphotransferase system (PTS), a major carbohydrate active -transport system, catalyzes the phosphorylation of incoming sugar substrates concomitant with their translocation across the cell membrane. This system is involved in fructose transport. This Bacillus subtilis (strain 168) protein is Fructose permease IID component (levG).